We begin with the raw amino-acid sequence, 483 residues long: Regulatory protein ViaA (483 aa).

This sequence belongs to the ViaA family. As to quaternary structure, homodimer. Interacts with RavA.

The protein localises to the cytoplasm. Its function is as follows. Component of the RavA-ViaA chaperone complex, which may act on the membrane to optimize the function of some of the respiratory chains. ViaA stimulates the ATPase activity of RavA. This is Regulatory protein ViaA from Salmonella dublin (strain CT_02021853).